We begin with the raw amino-acid sequence, 887 residues long: MNSVNSIRSTFLDYFQLNGHKIVSSSPLVPRNDPTLMFTNAGMVQFKNVFTGLEQRPYKQATTAQKCVRAGGKHNDLDNVGYTARHHTFFEMLGNFSFGDYFKEEAIFLSWNLLTKEFCLPEDKLLVTVYHNDDVSTELWRKISGLPDEKIVRIATADNFWAMGDTGPCGPCSEIFYDHGDEIWGGPPGSAYEDGDRFIEIWNLVFMQYEQVNKEKRVELPHPSIDTGMGLERIAAVLQGGHDNYDIDLFRALIAVSQEITGVKATGDFIASHRVIADHLRSSAFLIADGVLPSNEGRGYVLRRIMRRAMRHAHLLGAKEPLMWRLLPVLIHEMGQAYPELVRAESLISETLKLEEIRFRKTLERGLGLLSEASTDLKEGDHLNGEIAFKLYDTYGFPLDLTQDALRCRGISVDVAAFNKAMEGQKAKARANWSGSGETVTEAIWFSVRDQLGATEFLGYETEKSEGILTALVRDGEIVDDISSGQKAILVVNQTPFYGESGGQIGDSGTISGKNFVFEVHDTQKKADGVFIHIGEVKSGQARMSECVELTVDGVRRKKIRVNHSATHLLHEALRQVLGSHVTQKGSLVSPDRLRFDFSHPKSVSLEELEKIEDLANEIVLQNSEVTTRLMLVDDAISEGAMALFGEKYGDEVRVVSMGNRLEKGKLKSRWSIELCGGTHVERTGDIGLIHIVSESSVAAGVRRIEALTGTAARLYLSRQDARVHEIADLLKTSATDVEERVRILLEDRRKLEKELNDERKKSVLSGGIVKSDQEDITIINGISFMGRVVKNISPRDLKTLVDSGKKKIGSGVVAFIGVSEDGKGSAVLGVTDDLTHKLNAVDLVRILSGILGGQGGGGRPDMAQSGGPKGNKADEALAVLKASLEG.

Residues His-564, His-568, Cys-676, and His-680 each coordinate Zn(2+). The disordered stretch occupies residues 854-873 (GQGGGGRPDMAQSGGPKGNK).

Belongs to the class-II aminoacyl-tRNA synthetase family. It depends on Zn(2+) as a cofactor.

The protein localises to the cytoplasm. It catalyses the reaction tRNA(Ala) + L-alanine + ATP = L-alanyl-tRNA(Ala) + AMP + diphosphate. In terms of biological role, catalyzes the attachment of alanine to tRNA(Ala) in a two-step reaction: alanine is first activated by ATP to form Ala-AMP and then transferred to the acceptor end of tRNA(Ala). Also edits incorrectly charged Ser-tRNA(Ala) and Gly-tRNA(Ala) via its editing domain. This is Alanine--tRNA ligase from Bartonella henselae (strain ATCC 49882 / DSM 28221 / CCUG 30454 / Houston 1) (Rochalimaea henselae).